Here is a 30-residue protein sequence, read N- to C-terminus: Superoxide dismutase [Cu-Zn] 1 (30 aa).

It belongs to the Cu-Zn superoxide dismutase family. Cu cation serves as cofactor. The cofactor is Zn(2+). As to expression, expressed in fruits, leaves and pollen grains.

The protein resides in the cytoplasm. The protein localises to the endoplasmic reticulum. The enzyme catalyses 2 superoxide + 2 H(+) = H2O2 + O2. With respect to regulation, inhibited by KCN and H(2)O(2). Its function is as follows. Destroys radicals which are normally produced within the cells and which are toxic to biological systems. Probably involved in the protection against oxidative stress during pollen development. This Olea europaea (Common olive) protein is Superoxide dismutase [Cu-Zn] 1.